Consider the following 210-residue polypeptide: Somatotropin-1 (210 aa).

The N-terminal stretch at 1–22 (MARALVLLSVVLVSLLVNQGRA) is a signal peptide. Zn(2+) is bound at residue His-38. An intrachain disulfide couples Cys-71 to Cys-183. Glu-192 is a binding site for Zn(2+). A disulfide bridge connects residues Cys-200 and Cys-208.

The protein belongs to the somatotropin/prolactin family.

Its subcellular location is the secreted. In terms of biological role, growth hormone plays an important role in growth control and is involved in the regulation of several anabolic processes. Implicated as an osmoregulatory substance important for seawater adaptation. This is Somatotropin-1 (gh1) from Carassius auratus (Goldfish).